The sequence spans 481 residues: Alkaline protease secretion protein AprF (481 aa).

A disordered region spans residues 462-481; sequence PAPLHTLSKTDTEENRSALN. The segment covering 469–481 has biased composition (basic and acidic residues); the sequence is SKTDTEENRSALN.

The protein belongs to the outer membrane factor (OMF) (TC 1.B.17) family.

It localises to the cell outer membrane. Functionally, involved in the secretion of alkaline protease. In Pseudomonas aeruginosa (strain ATCC 15692 / DSM 22644 / CIP 104116 / JCM 14847 / LMG 12228 / 1C / PRS 101 / PAO1), this protein is Alkaline protease secretion protein AprF (aprF).